The following is a 106-amino-acid chain: UPF0060 membrane protein Bphy_5052 (106 aa).

Transmembrane regions (helical) follow at residues 4-24 (LLLY…PWRW), 30-50 (SVWL…LLTF), 58-78 (VYAA…WCVD), and 82-102 (PSAW…IIAF).

It belongs to the UPF0060 family.

The protein resides in the cell inner membrane. In Paraburkholderia phymatum (strain DSM 17167 / CIP 108236 / LMG 21445 / STM815) (Burkholderia phymatum), this protein is UPF0060 membrane protein Bphy_5052.